Reading from the N-terminus, the 349-residue chain is Kelch domain-containing protein 9 (349 aa).

3 Kelch repeats span residues arginine 39 to glycine 89, tryptophan 91 to cysteine 137, and glutamine 325 to isoleucine 349.

Interacts with CCNA1.

The chain is Kelch domain-containing protein 9 (KLHDC9) from Homo sapiens (Human).